Consider the following 439-residue polypeptide: Large ribosomal subunit protein mL44 (439 aa).

Disordered stretches follow at residues 39 to 73 and 247 to 282; these read QSTA…SLPS and KAME…YGNP. Over residues 247-257 the composition is skewed to basic and acidic residues; that stretch reads KAMEEQDQDKT. Residues 258 to 274 show a composition bias toward acidic residues; that stretch reads PDEEEAEMVANEQDQDV.

This sequence belongs to the ribonuclease III family. Mitochondrion-specific ribosomal protein mL44 subfamily. Component of the mitochondrial large ribosomal subunit (mt-LSU). Mature N.crassa 74S mitochondrial ribosomes consist of a small (37S) and a large (54S) subunit. The 37S small subunit contains a 16S ribosomal RNA (16S mt-rRNA) and 32 different proteins. The 54S large subunit contains a 23S rRNA (23S mt-rRNA) and 42 different proteins. mL44 forms a heterodimer with mL57 and stabilizes rRNA expansion segments 1/2 at a membrane-facing protuberance close to the point of attachment of the ribosome to the translocon in the membrane.

Its subcellular location is the mitochondrion. Functionally, component of the mitochondrial ribosome (mitoribosome), a dedicated translation machinery responsible for the synthesis of mitochondrial genome-encoded proteins, including at least some of the essential transmembrane subunits of the mitochondrial respiratory chain. The mitoribosomes are attached to the mitochondrial inner membrane and translation products are cotranslationally integrated into the membrane. This Neurospora crassa (strain ATCC 24698 / 74-OR23-1A / CBS 708.71 / DSM 1257 / FGSC 987) protein is Large ribosomal subunit protein mL44 (mrpl3).